A 311-amino-acid polypeptide reads, in one-letter code: Thymidylate synthase (311 aa).

DUMP is bound by residues arginine 28 and 172–173 (RR). Cysteine 192 functions as the Nucleophile in the catalytic mechanism. DUMP is bound by residues 213–216 (RSCD), asparagine 224, and 254–256 (HLY). Position 216 (aspartate 216) interacts with (6R)-5,10-methylene-5,6,7,8-tetrahydrofolate. Residue alanine 310 participates in (6R)-5,10-methylene-5,6,7,8-tetrahydrofolate binding.

The protein belongs to the thymidylate synthase family. Bacterial-type ThyA subfamily. As to quaternary structure, homodimer.

It is found in the cytoplasm. The catalysed reaction is dUMP + (6R)-5,10-methylene-5,6,7,8-tetrahydrofolate = 7,8-dihydrofolate + dTMP. It functions in the pathway pyrimidine metabolism; dTTP biosynthesis. In terms of biological role, catalyzes the reductive methylation of 2'-deoxyuridine-5'-monophosphate (dUMP) to 2'-deoxythymidine-5'-monophosphate (dTMP) while utilizing 5,10-methylenetetrahydrofolate (mTHF) as the methyl donor and reductant in the reaction, yielding dihydrofolate (DHF) as a by-product. This enzymatic reaction provides an intracellular de novo source of dTMP, an essential precursor for DNA biosynthesis. In Sphingopyxis alaskensis (strain DSM 13593 / LMG 18877 / RB2256) (Sphingomonas alaskensis), this protein is Thymidylate synthase.